A 154-amino-acid polypeptide reads, in one-letter code: Myoglobin (154 aa).

The Globin domain maps to 2–148 (GLSEAEWQLV…FRKDIAAKYK (147 aa)). Position 4 is a phosphoserine (serine 4). Histidine 65 provides a ligand contact to nitrite. Histidine 65 contributes to the O2 binding site. Residue threonine 68 is modified to Phosphothreonine. Histidine 94 serves as a coordination point for heme b.

It belongs to the globin family. In terms of assembly, monomeric.

The protein resides in the cytoplasm. The protein localises to the sarcoplasm. It catalyses the reaction Fe(III)-heme b-[protein] + nitric oxide + H2O = Fe(II)-heme b-[protein] + nitrite + 2 H(+). The catalysed reaction is H2O2 + AH2 = A + 2 H2O. Monomeric heme protein which primary function is to store oxygen and facilitate its diffusion within muscle tissues. Reversibly binds oxygen through a pentacoordinated heme iron and enables its timely and efficient release as needed during periods of heightened demand. Depending on the oxidative conditions of tissues and cells, and in addition to its ability to bind oxygen, it also has a nitrite reductase activity whereby it regulates the production of bioactive nitric oxide. Under stress conditions, like hypoxia and anoxia, it also protects cells against reactive oxygen species thanks to its pseudoperoxidase activity. This Indopacetus pacificus (Longman's beaked whale) protein is Myoglobin (MB).